A 320-amino-acid polypeptide reads, in one-letter code: Undecaprenyl-diphosphatase (320 aa).

The next 8 helical transmembrane spans lie at 9 to 29 (FVLV…LEVF), 82 to 102 (GVAF…WYFW), 130 to 150 (LGII…KKLI), 161 to 181 (LGAI…GEKL), 191 to 211 (LTMQ…IPGV), 236 to 256 (FLLG…DVFA), 265 to 285 (LPLI…IAGL), and 296 to 316 (VFIW…SAGI).

This sequence belongs to the UppP family.

It is found in the cell inner membrane. It catalyses the reaction di-trans,octa-cis-undecaprenyl diphosphate + H2O = di-trans,octa-cis-undecaprenyl phosphate + phosphate + H(+). In terms of biological role, catalyzes the dephosphorylation of undecaprenyl diphosphate (UPP). Confers resistance to bacitracin. The protein is Undecaprenyl-diphosphatase of Trichormus variabilis (strain ATCC 29413 / PCC 7937) (Anabaena variabilis).